An 83-amino-acid polypeptide reads, in one-letter code: Protein CASPARIAN STRIP INTEGRITY FACTOR 2 (83 aa).

A signal peptide spans methionine 1–alanine 28. The interval serine 61–asparagine 83 is disordered. The residue at position 64 (tyrosine 64) is a Sulfotyrosine. 2 positions are modified to hydroxyproline: proline 69 and proline 71.

In terms of assembly, interacts with the specific receptor kinases GSO1 and GSO2. Expressed exclusively in the root stele.

Functionally, peptide hormone required for contiguous Casparian strip diffusion barrier formation in roots via the regulation of CASPs protein expression and distribution in a GSO1-GSO2 signaling pathway. The Casparian strip is required for ion homeostasis (e.g. iron and potassium ions). The protein is Protein CASPARIAN STRIP INTEGRITY FACTOR 2 of Arabidopsis thaliana (Mouse-ear cress).